Consider the following 255-residue polypeptide: Small ribosomal subunit protein eS1 (255 aa).

Over residues 1–18 the composition is skewed to basic residues; that stretch reads MAVGKNKRLSKGKKGLKK. Residues 1-20 form a disordered region; it reads MAVGKNKRLSKGKKGLKKRV. At alanine 2 the chain carries N-acetylalanine; partial.

This sequence belongs to the eukaryotic ribosomal protein eS1 family. As to quaternary structure, component of the small ribosomal subunit. Mature ribosomes consist of a small (40S) and a large (60S) subunit. The 40S subunit contains about 33 different proteins and 1 molecule of RNA (18S). The 60S subunit contains about 49 different proteins and 3 molecules of RNA (25S, 5.8S and 5S).

It localises to the cytoplasm. This Coccidioides immitis (strain RS) (Valley fever fungus) protein is Small ribosomal subunit protein eS1.